Reading from the N-terminus, the 437-residue chain is Type II methylase M.HgiEI (437 aa).

An SAM-dependent MTase C5-type domain is found at 4-431; it reads FRFIDLFAGI…KRLQCVKLFE (428 aa). Residue C75 is part of the active site.

It belongs to the class I-like SAM-binding methyltransferase superfamily. C5-methyltransferase family.

The catalysed reaction is a 2'-deoxycytidine in DNA + S-adenosyl-L-methionine = a 5-methyl-2'-deoxycytidine in DNA + S-adenosyl-L-homocysteine + H(+). Functionally, a methylase that recognizes the double-stranded sequence 5'-GGWCC-3', methylates C-? on both strands, and protects the DNA from cleavage by the HgiEI endonuclease. This system is more active than isoschizomeric RM.HgiBI. The polypeptide is Type II methylase M.HgiEI (Herpetosiphon aurantiacus (Herpetosiphon giganteus)).